The primary structure comprises 481 residues: Probable glycine dehydrogenase (decarboxylating) subunit 2 (481 aa).

Position 269 is an N6-(pyridoxal phosphate)lysine (Lys-269).

It belongs to the GcvP family. C-terminal subunit subfamily. The glycine cleavage system is composed of four proteins: P, T, L and H. In this organism, the P 'protein' is a heterodimer of two subunits. It depends on pyridoxal 5'-phosphate as a cofactor.

It catalyses the reaction N(6)-[(R)-lipoyl]-L-lysyl-[glycine-cleavage complex H protein] + glycine + H(+) = N(6)-[(R)-S(8)-aminomethyldihydrolipoyl]-L-lysyl-[glycine-cleavage complex H protein] + CO2. Its function is as follows. The glycine cleavage system catalyzes the degradation of glycine. The P protein binds the alpha-amino group of glycine through its pyridoxal phosphate cofactor; CO(2) is released and the remaining methylamine moiety is then transferred to the lipoamide cofactor of the H protein. This chain is Probable glycine dehydrogenase (decarboxylating) subunit 2, found in Chlorobium chlorochromatii (strain CaD3).